The chain runs to 127 residues: uncharacterized protein (127 aa).

Residues 12–32 form a helical membrane-spanning segment; it reads FFFLILFYFCIISSFLFLFIF.

The protein localises to the membrane. This is an uncharacterized protein from Saccharomyces cerevisiae (strain ATCC 204508 / S288c) (Baker's yeast).